Reading from the N-terminus, the 357-residue chain is Endo-1,4-beta-xylanase Xyn11B (357 aa).

Residues 1 to 27 (MKIFQNTKNVIVSIAWAAALCTSAVSA) form the signal peptide. The 198-residue stretch at 29 to 226 (TLTSNSTGTN…SRGSSDITVS (198 aa)) folds into the GH11 domain. Glu-116 functions as the Nucleophile in the catalytic mechanism. The Proton donor role is filled by Glu-213. The segment at 220–245 (SSDITVSQGGSSGGGNSSSSSSASGG) is disordered.

The protein belongs to the glycosyl hydrolase 11 (cellulase G) family.

The protein resides in the secreted. The catalysed reaction is Endohydrolysis of (1-&gt;4)-beta-D-xylosidic linkages in xylans.. Its pathway is glycan degradation; xylan degradation. Endo-acting xylanase which specifically cleaves internal linkages on the xylan backbone, releasing xylooligosaccharides. Is able to hydrolyze glucuronoxylan and the arabinoxylan from wheat. This is Endo-1,4-beta-xylanase Xyn11B (xyn11B) from Cellvibrio japonicus (Pseudomonas fluorescens subsp. cellulosa).